Reading from the N-terminus, the 120-residue chain is Chaperonin GroEL (120 aa).

23 to 27 (DGTTT) serves as a coordination point for ATP.

The protein belongs to the chaperonin (HSP60) family. As to quaternary structure, forms a cylinder of 14 subunits composed of two heptameric rings stacked back-to-back. Interacts with the co-chaperonin GroES.

It localises to the cytoplasm. It catalyses the reaction ATP + H2O + a folded polypeptide = ADP + phosphate + an unfolded polypeptide.. Together with its co-chaperonin GroES, plays an essential role in assisting protein folding. The GroEL-GroES system forms a nano-cage that allows encapsulation of the non-native substrate proteins and provides a physical environment optimized to promote and accelerate protein folding. This Mycobacterium shimoidei protein is Chaperonin GroEL.